We begin with the raw amino-acid sequence, 324 residues long: MYNVKIENTGRYVPDNIVTNEDISKIVDTNDKWIRERTGIKERRISKGENTSHMAIKSAKDVLRKSSIKADELDLIIVATCTPDCFVPSTACIVQDAIGATKATCFDINAACTGFMYALSVASQFIKSGQSKNALVIGAETLSKMINWQDRGTCVLFADGAGAAILTRSEEVGLISQYTCSDGTGGKFLKCDALPVENPYVSEKTEFLNKLSMEGREVFKFAVNAMIDSVHKVLEKTDYTIEDIDYIVPHQANIRIIEYVAKKLKVSQDKFYINLHRYGNTSGASIPIALDEMNEKNMLKKGDKIILVGFGGGLTFGAHLIQWN.

Active-site residues include C112 and H250. The segment at 251–255 (QANIR) is ACP-binding. N280 is an active-site residue.

It belongs to the thiolase-like superfamily. FabH family. As to quaternary structure, homodimer.

The protein localises to the cytoplasm. The catalysed reaction is malonyl-[ACP] + acetyl-CoA + H(+) = 3-oxobutanoyl-[ACP] + CO2 + CoA. The protein operates within lipid metabolism; fatty acid biosynthesis. Catalyzes the condensation reaction of fatty acid synthesis by the addition to an acyl acceptor of two carbons from malonyl-ACP. Catalyzes the first condensation reaction which initiates fatty acid synthesis and may therefore play a role in governing the total rate of fatty acid production. Possesses both acetoacetyl-ACP synthase and acetyl transacylase activities. Its substrate specificity determines the biosynthesis of branched-chain and/or straight-chain of fatty acids. The polypeptide is Beta-ketoacyl-[acyl-carrier-protein] synthase III (Clostridium novyi (strain NT)).